The chain runs to 285 residues: 2-dehydro-3-deoxyphosphooctonate aldolase (285 aa).

Belongs to the KdsA family.

The protein localises to the cytoplasm. It catalyses the reaction D-arabinose 5-phosphate + phosphoenolpyruvate + H2O = 3-deoxy-alpha-D-manno-2-octulosonate-8-phosphate + phosphate. Its pathway is carbohydrate biosynthesis; 3-deoxy-D-manno-octulosonate biosynthesis; 3-deoxy-D-manno-octulosonate from D-ribulose 5-phosphate: step 2/3. It participates in bacterial outer membrane biogenesis; lipopolysaccharide biosynthesis. The protein is 2-dehydro-3-deoxyphosphooctonate aldolase of Acinetobacter baylyi (strain ATCC 33305 / BD413 / ADP1).